We begin with the raw amino-acid sequence, 620 residues long: Protein CNGC15b (620 aa).

The next 6 membrane-spanning stretches (helical) occupy residues 73-93 (IFLV…YLPI), 102-122 (IGIA…VFYV), 161-181 (GFFL…WIVI), 198-218 (FIII…SSQI), 237-257 (LMLY…LSIE), and 356-376 (GEIM…ALLI). Residue 462 to 559 (LFDAMDERML…SSTRTVKAIS (98 aa)) participates in a nucleoside 3',5'-cyclic phosphate binding.

This sequence belongs to the cyclic nucleotide-gated cation channel (TC 1.A.1.5) family. Interacts (via N-terminus) with DMI1 (via c-terminus). The Nod factor has no effect on this interaction, implying that the complex is maintained after activation. In terms of tissue distribution, expressed in roots, stems, leaves, flowers and pods.

It is found in the nucleus membrane. In terms of biological role, cyclic nucleotide-gated channel involved in the establishment of both rhizobial and mycorrhizal associations. Required for full activation of nuclear-localized Ca(2+) oscillations by Nod and Myc factors. Simultaneous activation of the K(+)-permeable channel DMI1 and the Ca(2+) channel CNGC15 can give rise to sustained Ca(2+) oscillations. May function during fertilization in both female and male gametophytic Ca(2+) signaling. In Medicago truncatula (Barrel medic), this protein is Protein CNGC15b.